Reading from the N-terminus, the 834-residue chain is WW domain-containing adapter protein with coiled-coil homolog (834 aa).

Disordered stretches follow at residues 1-247 (MVMH…WSEH), 268-411 (KPKE…SVAT), and 430-504 (VTGA…GAKG). Residues 22 to 31 (HTSYQSSKYS) are compositionally biased toward low complexity. Over residues 33–50 (SKRDYERDRSSNYRDRDL) the composition is skewed to basic and acidic residues. Gly residues predominate over residues 53 to 77 (GAGGGGGGGSAGGGGGGSGNGGGPL). Basic and acidic residues predominate over residues 96–108 (RSHDLRDRSDHRG). Positions 109–119 (GGGGNGRGGSG) are enriched in gly residues. 3 stretches are compositionally biased toward basic and acidic residues: residues 127–168 (KMRD…DRRG), 181–246 (SSRE…DWSE), and 268–303 (KPKE…DRFS). Residues 244–271 (WSEHVSSSGKMYYYNCKTEISQWEKPKE) enclose the WW domain. 2 stretches are compositionally biased toward polar residues: residues 304–314 (RSTYKHSNSSR) and 350–363 (GDST…YSLS). Residues 369 to 384 (HGGGPGGGGPGGGGGS) are compositionally biased toward gly residues. Low complexity-rich tracts occupy residues 402 to 411 (TANSSASVAT) and 431 to 466 (TGAT…LRNS). Polar residues predominate over residues 472–496 (GSTSGTTVPTLGSQDPHQHHLNSNA).

In terms of tissue distribution, expressed in adult head and thorax and in larval central nervous system and fat body.

It is found in the nucleus. The protein localises to the lysosome. Functionally, acts as a linker between gene transcription and histone H2B monoubiquitination at 'Lys-118'. Regulates the cell-cycle checkpoint activation in response to DNA damage. Positive regulator of amino acid starvation-induced autophagy. Also acts as a negative regulator of basal autophagy. Positively regulates mTor activity. Promotes, in an energy-dependent manner, the assembly of the TTT complex and the RUVBL complex composed of pont and rept into the TTT-RUVBL complex. This leads to dimerization of the mTORC1 complex and its subsequent activation. May negatively regulate the ubiquitin proteasome pathway. Required for habituation, a form of non-associative learning. This chain is WW domain-containing adapter protein with coiled-coil homolog, found in Drosophila melanogaster (Fruit fly).